Consider the following 321-residue polypeptide: MATH domain and coiled-coil domain-containing protein At3g58410 (321 aa).

The MATH domain occupies 6–128 (GKKFAWVIKN…NGELMIVAEV (123 aa)). The stretch at 255–310 (KVDWLEKKLDQVRDKKEKERSCLAKLQETEETLLKLKQKCTELDALMDTEKAELSA) forms a coiled coil.

The polypeptide is MATH domain and coiled-coil domain-containing protein At3g58410 (Arabidopsis thaliana (Mouse-ear cress)).